Here is a 78-residue protein sequence, read N- to C-terminus: Calcium/calmodulin-dependent protein kinase II inhibitor 1 (78 aa).

The tract at residues 41 to 68 (NKRPPKLGQIGRSKRVVIEDDRIDDVLK) is CAMK2 inhibitory domain.

The protein belongs to the CAMK2N family. In terms of assembly, interacts with CAMK2B; the presence of Ca(2+)/calmodulin increases the interaction but is not essential. Interacts with CAMK2A; this interaction requires CAMK2A activation by Ca(2+).

It localises to the synapse. Its subcellular location is the cell projection. It is found in the dendrite. The protein resides in the postsynaptic density. Its function is as follows. Potent and specific inhibitor of CaM-kinase II (CAMK2). Plays a role in the maintenance of long-term retrieval-induced memory in response to contextual fear. Modulates blood pressure and vascular reactivity via regulation of CAMK2 activity in addition to regulation of left ventricular mass. Mediates the NLRP3 inflammasome in cardiomyocytes via acting as an inhibitor of the MAPK14/p38 and MAPK8/JNK pathways, thereby regulating ventricular remodeling and cardiac rhythm post-myocardial infarction. Negatively effects insulin sensitivity and promotes lipid formation in adipose tissues independent of CAMK2 signaling. This chain is Calcium/calmodulin-dependent protein kinase II inhibitor 1 (CAMK2N1), found in Bos taurus (Bovine).